The chain runs to 651 residues: Chaperone protein HtpG (651 aa).

The tract at residues 1-353 (MAAHVEQLEF…AQDMSLNVSR (353 aa)) is a; substrate-binding. The interval 354 to 569 (EILQQDRQIR…TFGITPALAR (216 aa)) is b. Residues 570-651 (MYRASGQPVP…RLTRTVGDQT (82 aa)) form a c region.

It belongs to the heat shock protein 90 family. In terms of assembly, homodimer.

Its subcellular location is the cytoplasm. In terms of biological role, molecular chaperone. Has ATPase activity. The polypeptide is Chaperone protein HtpG (Mycolicibacterium vanbaalenii (strain DSM 7251 / JCM 13017 / BCRC 16820 / KCTC 9966 / NRRL B-24157 / PYR-1) (Mycobacterium vanbaalenii)).